We begin with the raw amino-acid sequence, 139 residues long: Hydrogenase maturation factor HypA (139 aa).

His2 lines the Ni(2+) pocket. Zn(2+)-binding residues include Cys73, Cys76, Cys110, and Cys113.

It belongs to the HypA/HybF family.

Functionally, involved in the maturation of [NiFe] hydrogenases. Required for nickel insertion into the metal center of the hydrogenase. The chain is Hydrogenase maturation factor HypA from Thermococcus onnurineus (strain NA1).